The following is a 299-amino-acid chain: MITFLYIFFSILILVLFVLGNFANGFIALVNFIDWVKRKKISSADQILTALAVSRIGLLWALLLNWYLTVLNPAFYSVELRITSYNAWVVTNHFSMWLAASLSIFYLLKIANFSNLIFLHLKRRVRSVILVILLGTLIFLVCHLLVANMDESMWAEEYEGNMTGKMKLRNTVHLSYLTVTTLWSFIPFTLSLISFLMLICSLCKHLKKMQLHGEGSQDLSTKVHIKALQTLISFLLLCAIFFLFLIISVWSPRRLQNDPVVMVSKAVGNIYLAFDSFILIWRTKKLKHTFLLILCQIRC.

A topological domain (extracellular) is located at residue methionine 1. A helical transmembrane segment spans residues 2 to 22; the sequence is ITFLYIFFSILILVLFVLGNF. Topologically, residues 23-55 are cytoplasmic; the sequence is ANGFIALVNFIDWVKRKKISSADQILTALAVSR. Residues 56-76 form a helical membrane-spanning segment; sequence IGLLWALLLNWYLTVLNPAFY. Over 77–87 the chain is Extracellular; that stretch reads SVELRITSYNA. The chain crosses the membrane as a helical span at residues 88-108; it reads WVVTNHFSMWLAASLSIFYLL. The Cytoplasmic segment spans residues 109-126; it reads KIANFSNLIFLHLKRRVR. A helical transmembrane segment spans residues 127–147; the sequence is SVILVILLGTLIFLVCHLLVA. At 148 to 181 the chain is on the extracellular side; it reads NMDESMWAEEYEGNMTGKMKLRNTVHLSYLTVTT. A glycan (N-linked (GlcNAc...) asparagine) is linked at asparagine 161. A helical transmembrane segment spans residues 182–202; that stretch reads LWSFIPFTLSLISFLMLICSL. Over 203-229 the chain is Cytoplasmic; it reads CKHLKKMQLHGEGSQDLSTKVHIKALQ. The helical transmembrane segment at 230–250 threads the bilayer; sequence TLISFLLLCAIFFLFLIISVW. The Extracellular portion of the chain corresponds to 251 to 259; the sequence is SPRRLQNDP. Residues 260–280 form a helical membrane-spanning segment; it reads VVMVSKAVGNIYLAFDSFILI. The Cytoplasmic portion of the chain corresponds to 281–299; sequence WRTKKLKHTFLLILCQIRC.

Belongs to the G-protein coupled receptor T2R family.

Its subcellular location is the membrane. Functionally, receptor that may play a role in the perception of bitterness and is gustducin-linked. May play a role in sensing the chemical composition of the gastrointestinal content. The activity of this receptor may stimulate alpha gustducin, mediate PLC-beta-2 activation and lead to the gating of TRPM5. The polypeptide is Taste receptor type 2 member 50 (TAS2R50) (Gorilla gorilla gorilla (Western lowland gorilla)).